Reading from the N-terminus, the 1084-residue chain is Teashirt homolog 1 (1084 aa).

Disordered regions lie at residues 49-108 (EETE…SVSY), 140-167 (NSAT…TAST), and 269-298 (GHYR…MEME). Polar residues-rich tracts occupy residues 57–71 (QSYQ…TNQD) and 140–152 (NSAT…SQKE). C2H2-type zinc fingers lie at residues 246–270 (FRCK…ETGH) and 307–331 (LKCM…KTKH). Basic and acidic residues predominate over residues 269–284 (GHYRDDNRDKDSEKTK). The C2H2-type 3; atypical zinc finger occupies 416–440 (LKCMECGSSHDTLQQLTAHMMVTGH). Disordered stretches follow at residues 467–534 (SIPL…EKFE) and 653–728 (TGKV…LKAK). Composition is skewed to basic and acidic residues over residues 496-534 (SEEK…EKFE), 653-671 (TGKV…EKSS), and 681-714 (KENK…ESTL). Ser-771 is modified (phosphoserine). Residues 855–879 (GRLTPKSSTPSTVSEKSDADGSSFE) form a disordered region. Over residues 859-868 (PKSSTPSTVS) the composition is skewed to polar residues. Residues 891–961 (RKGRQSNWNP…NVKYQLRRTG (71 aa)) constitute a DNA-binding region (homeobox; atypical). C2H2-type zinc fingers lie at residues 976 to 998 (FFCN…LETH) and 1044 to 1067 (FQCK…SKTH).

The protein belongs to the teashirt C2H2-type zinc-finger protein family. As to quaternary structure, interacts (via homeobox domain) with APBB1 (via PID domain 1).

It localises to the nucleus. Functionally, probable transcriptional regulator involved in developmental processes. May act as a transcriptional repressor (Potential). The sequence is that of Teashirt homolog 1 (Tshz1) from Mus musculus (Mouse).